The sequence spans 393 residues: Triacylglycerol lipase 1 (393 aa).

The first 20 residues, 1–20 (MKWLLVAVLTSLTIFSALTQ), serve as a signal peptide directing secretion. Asn-41 carries N-linked (GlcNAc...) asparagine glycosylation. Ser-166 serves as the catalytic Nucleophile. Residue Asn-261 is glycosylated (N-linked (GlcNAc...) asparagine). Active-site charge relay system residues include Asp-334 and His-363.

Belongs to the AB hydrolase superfamily. Lipase family. In terms of tissue distribution, expressed in seedlings, roots, leaves, flowers and siliques. Specifically expressed in the epidermis.

It is found in the secreted. The enzyme catalyses a triacylglycerol + H2O = a diacylglycerol + a fatty acid + H(+). It catalyses the reaction 1,2,3-tributanoylglycerol + H2O = dibutanoylglycerol + butanoate + H(+). The catalysed reaction is 1,2,3-trioctanoylglycerol + H2O = dioctanoylglycerol + octanoate + H(+). Its pathway is lipid metabolism; glycerolipid metabolism. Functionally, triacylglycerol (TAG) lipase active on triolein, trioctanoin, tributyrin and 1,3-Diolein, but not on phospho- and galactolipids. Involved but dispensable for TAG storage breakdown during seed germination. The chain is Triacylglycerol lipase 1 from Arabidopsis thaliana (Mouse-ear cress).